A 327-amino-acid polypeptide reads, in one-letter code: Leucotoxin LukD (327 aa).

The signal sequence occupies residues 1–26 (MKIEKLGKSSVASSIALLLLSNTVDA).

Belongs to the aerolysin family. Toxicity requires sequential binding and synergistic association of a class S and a class F component which form heterooligomeric complexes. LukE (class S) associates with LukD (class F). LukD can also associate with HlgA.

The protein localises to the secreted. In terms of biological role, part of a bi-component leucotoxin that acts by forming pores in the membrane of the target cells. LukE-LukD is as effective as the Panton-Valentine leucocidin (PVL) for inducing dermonecrosis when injected in the rabbit skin, but not hemolytic and poorly leucotoxic on human blood cells compared to other leucotoxins expressed by S.aureus. HlgA-LukD is a Ca(2+) channel inducer. This is Leucotoxin LukD (lukD) from Staphylococcus aureus.